We begin with the raw amino-acid sequence, 473 residues long: Photosystem II CP43 reaction center protein (473 aa).

A propeptide spanning residues 1-14 is cleaved from the precursor; it reads MKILYSLRRFYHVE. Threonine 15 is subject to N-acetylthreonine. Threonine 15 carries the post-translational modification Phosphothreonine. The next 5 helical transmembrane spans lie at 69-93, 134-155, 178-200, 255-275, and 291-312; these read LFEV…PHLA, LLGP…KDRN, KALY…RKIT, KPFA…LSYS, and WFNN…ASQA. Glutamate 367 serves as a coordination point for [CaMn4O5] cluster. The helical transmembrane segment at 447-471 threads the bilayer; sequence RARAAAAGFEKGIDRDLEPVLYMNP.

The protein belongs to the PsbB/PsbC family. PsbC subfamily. In terms of assembly, PSII is composed of 1 copy each of membrane proteins PsbA, PsbB, PsbC, PsbD, PsbE, PsbF, PsbH, PsbI, PsbJ, PsbK, PsbL, PsbM, PsbT, PsbX, PsbY, PsbZ, Psb30/Ycf12, at least 3 peripheral proteins of the oxygen-evolving complex and a large number of cofactors. It forms dimeric complexes. The cofactor is Binds multiple chlorophylls and provides some of the ligands for the Ca-4Mn-5O cluster of the oxygen-evolving complex. It may also provide a ligand for a Cl- that is required for oxygen evolution. PSII binds additional chlorophylls, carotenoids and specific lipids..

Its subcellular location is the plastid. It localises to the chloroplast thylakoid membrane. Functionally, one of the components of the core complex of photosystem II (PSII). It binds chlorophyll and helps catalyze the primary light-induced photochemical processes of PSII. PSII is a light-driven water:plastoquinone oxidoreductase, using light energy to abstract electrons from H(2)O, generating O(2) and a proton gradient subsequently used for ATP formation. This is Photosystem II CP43 reaction center protein from Hordeum vulgare (Barley).